The primary structure comprises 258 residues: Putative phosphoenolpyruvate synthase regulatory protein (258 aa).

146–153 serves as a coordination point for ADP; the sequence is GVSRVGKT.

The protein belongs to the pyruvate, phosphate/water dikinase regulatory protein family. PSRP subfamily.

It catalyses the reaction [pyruvate, water dikinase] + ADP = [pyruvate, water dikinase]-phosphate + AMP + H(+). The enzyme catalyses [pyruvate, water dikinase]-phosphate + phosphate + H(+) = [pyruvate, water dikinase] + diphosphate. Bifunctional serine/threonine kinase and phosphorylase involved in the regulation of the phosphoenolpyruvate synthase (PEPS) by catalyzing its phosphorylation/dephosphorylation. The polypeptide is Putative phosphoenolpyruvate synthase regulatory protein (Thiobacillus denitrificans (strain ATCC 25259 / T1)).